Here is a 962-residue protein sequence, read N- to C-terminus: Protease 3 (962 aa).

The first 23 residues, 1–23 (MPRSTWFKALLLLVALWGPAVQA), serve as a signal peptide directing secretion. His-88 contacts Zn(2+). The active-site Proton acceptor is Glu-91. Zn(2+)-binding residues include His-92 and Glu-169.

It belongs to the peptidase M16 family. Monomer. Zn(2+) is required as a cofactor.

Its subcellular location is the periplasm. It catalyses the reaction Preferential cleavage of 16-Tyr-|-Leu-17 and 25-Phe-|-Tyr-26 bonds of oxidized insulin B chain. Also acts on other substrates of Mw less than 7 kDa such as insulin and glucagon.. Endopeptidase that degrades small peptides of less than 7 kDa, such as glucagon and insulin. This chain is Protease 3 (ptrA), found in Salmonella typhimurium (strain LT2 / SGSC1412 / ATCC 700720).